Consider the following 338-residue polypeptide: tRNA N6-adenosine threonylcarbamoyltransferase (338 aa).

Fe cation-binding residues include His-111 and His-115. Substrate is bound by residues 134-138 (LVSGG), Asp-167, Gly-180, and Asn-272. A Fe cation-binding site is contributed by Asp-300.

The protein belongs to the KAE1 / TsaD family. The cofactor is Fe(2+).

The protein localises to the cytoplasm. It carries out the reaction L-threonylcarbamoyladenylate + adenosine(37) in tRNA = N(6)-L-threonylcarbamoyladenosine(37) in tRNA + AMP + H(+). In terms of biological role, required for the formation of a threonylcarbamoyl group on adenosine at position 37 (t(6)A37) in tRNAs that read codons beginning with adenine. Is involved in the transfer of the threonylcarbamoyl moiety of threonylcarbamoyl-AMP (TC-AMP) to the N6 group of A37, together with TsaE and TsaB. TsaD likely plays a direct catalytic role in this reaction. The sequence is that of tRNA N6-adenosine threonylcarbamoyltransferase from Vibrio parahaemolyticus serotype O3:K6 (strain RIMD 2210633).